A 1443-amino-acid chain; its full sequence is DNA polymerase III PolC-type (1443 aa).

Residues 408-567 (FVIFDIETTG…YDTQALKKVF (160 aa)) enclose the Exonuclease domain.

The protein belongs to the DNA polymerase type-C family. PolC subfamily.

It localises to the cytoplasm. The enzyme catalyses DNA(n) + a 2'-deoxyribonucleoside 5'-triphosphate = DNA(n+1) + diphosphate. Its function is as follows. Required for replicative DNA synthesis. This DNA polymerase also exhibits 3' to 5' exonuclease activity. The chain is DNA polymerase III PolC-type from Mycoplasma pneumoniae (strain ATCC 29342 / M129 / Subtype 1) (Mycoplasmoides pneumoniae).